A 234-amino-acid chain; its full sequence is Triosephosphate isomerase (234 aa).

8–10 (NFK) is a binding site for substrate. The Electrophile role is filled by histidine 90. Catalysis depends on glutamate 159, which acts as the Proton acceptor. Substrate is bound by residues glycine 165, serine 197, and 218–219 (GS).

In terms of assembly, homodimer.

It is found in the cytoplasm. It carries out the reaction D-glyceraldehyde 3-phosphate = dihydroxyacetone phosphate. The protein operates within carbohydrate biosynthesis; gluconeogenesis. It functions in the pathway carbohydrate degradation; glycolysis; D-glyceraldehyde 3-phosphate from glycerone phosphate: step 1/1. Its function is as follows. Involved in the gluconeogenesis. Catalyzes stereospecifically the conversion of dihydroxyacetone phosphate (DHAP) to D-glyceraldehyde-3-phosphate (G3P). This chain is Triosephosphate isomerase, found in Helicobacter pylori (strain ATCC 700392 / 26695) (Campylobacter pylori).